A 403-amino-acid polypeptide reads, in one-letter code: RILP-like protein 1 (403 aa).

Residue Ser-7 is modified to Phosphoserine. An RH1 domain is found at 10-97; it reads AAESALEKNV…RLERMDRIEK (88 aa). Residue Cys-47 is modified to S-nitrosocysteine. The stretch at 76-265 forms a coiled coil; that stretch reads ELDELRLELD…GELNQNGEEE (190 aa). The RH2 domain maps to 291–356; that stretch reads RPRFTLQELR…PQPESGIKRL (66 aa). The segment at 329-348 is disordered; it reads EEENQIPQPPPIAHPRMSPQ.

Belongs to the RILPL family. Interacts (when S-nitrosylated) with GAPDH. Interacts with RAB8A; interaction is dependent on the phosphorylation of 'Thr-72' of RAB8A. Interacts with RAB10 and RAB12; the interaction is dependent on the phosphorylation of 'Thr-73' of RAB10, and 'Ser-105' of RAB12. Post-translationally, S-nitrosylation is required for the interaction with GAPDH.

The protein localises to the cytoplasm. It is found in the cytosol. The protein resides in the cytoskeleton. It localises to the microtubule organizing center. Its subcellular location is the centrosome. The protein localises to the centriole. It is found in the cilium basal body. Plays a role in the regulation of cell shape and polarity. Plays a role in cellular protein transport, including protein transport away from primary cilia. Neuroprotective protein, which acts by sequestring GAPDH in the cytosol and prevent the apoptotic function of GAPDH in the nucleus. Competes with SIAH1 for binding GAPDH. Does not regulate lysosomal morphology and distribution. Binds to RAB10 following LRRK2-mediated RAB10 phosphorylation which leads to inhibition of ciliogenesis. This Bos taurus (Bovine) protein is RILP-like protein 1 (RILPL1).